A 461-amino-acid chain; its full sequence is Chromosomal replication initiator protein DnaA (461 aa).

The domain I, interacts with DnaA modulators stretch occupies residues 1–84 (MAVSLWQQCI…RFDIGSRPSA (84 aa)). Residues 84-124 (AKKFEPAPVATVRAPNTQTKATVGTYFNTQAEPIANANHRS) form a domain II region. The tract at residues 125-341 (NINPTYQFDN…GALNRVIANA (217 aa)) is domain III, AAA+ region. 4 residues coordinate ATP: G169, G171, K172, and T173. A domain IV, binds dsDNA region spans residues 342 to 461 (NFTGRPITID…YANLIRTLSS (120 aa)).

Belongs to the DnaA family. As to quaternary structure, oligomerizes as a right-handed, spiral filament on DNA at oriC.

It is found in the cytoplasm. In terms of biological role, plays an essential role in the initiation and regulation of chromosomal replication. ATP-DnaA binds to the origin of replication (oriC) to initiate formation of the DNA replication initiation complex once per cell cycle. Binds the DnaA box (a 9 base pair repeat at the origin) and separates the double-stranded (ds)DNA. Forms a right-handed helical filament on oriC DNA; dsDNA binds to the exterior of the filament while single-stranded (ss)DNA is stabiized in the filament's interior. The ATP-DnaA-oriC complex binds and stabilizes one strand of the AT-rich DNA unwinding element (DUE), permitting loading of DNA polymerase. After initiation quickly degrades to an ADP-DnaA complex that is not apt for DNA replication. Binds acidic phospholipids. The polypeptide is Chromosomal replication initiator protein DnaA (Shewanella putrefaciens (strain CN-32 / ATCC BAA-453)).